We begin with the raw amino-acid sequence, 386 residues long: Succinate--CoA ligase [ADP-forming] subunit beta (386 aa).

Residues 9-244 (KEVLRKYGVA…LDEEDPKEIE (236 aa)) enclose the ATP-grasp domain. ATP-binding positions include lysine 46, 53–55 (GRG), glutamate 99, cysteine 102, and glutamate 107. Residues asparagine 199 and aspartate 213 each coordinate Mg(2+). Residues asparagine 264 and 321–323 (GIM) each bind substrate.

It belongs to the succinate/malate CoA ligase beta subunit family. In terms of assembly, heterotetramer of two alpha and two beta subunits. Requires Mg(2+) as cofactor.

It catalyses the reaction succinate + ATP + CoA = succinyl-CoA + ADP + phosphate. The catalysed reaction is GTP + succinate + CoA = succinyl-CoA + GDP + phosphate. Its pathway is carbohydrate metabolism; tricarboxylic acid cycle; succinate from succinyl-CoA (ligase route): step 1/1. Succinyl-CoA synthetase functions in the citric acid cycle (TCA), coupling the hydrolysis of succinyl-CoA to the synthesis of either ATP or GTP and thus represents the only step of substrate-level phosphorylation in the TCA. The beta subunit provides nucleotide specificity of the enzyme and binds the substrate succinate, while the binding sites for coenzyme A and phosphate are found in the alpha subunit. This Bacillus licheniformis (strain ATCC 14580 / DSM 13 / JCM 2505 / CCUG 7422 / NBRC 12200 / NCIMB 9375 / NCTC 10341 / NRRL NRS-1264 / Gibson 46) protein is Succinate--CoA ligase [ADP-forming] subunit beta.